The following is a 119-amino-acid chain: Large ribosomal subunit protein uL22c (119 aa).

Belongs to the universal ribosomal protein uL22 family. Part of the 50S ribosomal subunit.

It localises to the plastid. It is found in the chloroplast. In terms of biological role, this protein binds specifically to 23S rRNA. Functionally, the globular domain of the protein is located near the polypeptide exit tunnel on the outside of the subunit, while an extended beta-hairpin is found that lines the wall of the exit tunnel in the center of the 70S ribosome. This chain is Large ribosomal subunit protein uL22c (rpl22), found in Chlorokybus atmophyticus (Soil alga).